Here is a 373-residue protein sequence, read N- to C-terminus: MNAPGTFTLGPGDGSARTARLTTAHGEIETPVFMPVGTQGTVKSLCPTDLQDIKARIILGNTYHLYLRPGDELVAKLGGLHRFMGWDGPILTDSGGFQVFSLSGLRRITEEGVTFASHIDGSKHLFSPEKVVSIQRNLGSDIMMVLDECVPYGADRAYTEKSLGLTTRWARRCRKAHPAGDRGQLMFGIVQGGFFKDLRAQSAEQIIEVGFDGYALGGLSVGESRAEMYDILGDAAPLLPADRPRYLMGVGAPRDLLAGMAAGIDMFDCVLPTRNARNGTLFTFQGKVNIKRAEYREDDSPLDPTCPCYACRTFSRAYLRHLYIAKELLSYRLNTLHNLTFFSIMMERARQAIREGRFAAYRAEMEALYPEGE.

The active-site Proton acceptor is the D93. Substrate-binding positions include 93–97 (DSGGF), D147, Q191, and G218. The RNA binding stretch occupies residues 249-255 (GVGAPRD). D268 acts as the Nucleophile in catalysis. The tract at residues 273–277 (TRNAR) is RNA binding; important for wobble base 34 recognition. Zn(2+) is bound by residues C306, C308, C311, and H337.

Belongs to the queuine tRNA-ribosyltransferase family. In terms of assembly, homodimer. Within each dimer, one monomer is responsible for RNA recognition and catalysis, while the other monomer binds to the replacement base PreQ1. Zn(2+) is required as a cofactor.

It carries out the reaction 7-aminomethyl-7-carbaguanine + guanosine(34) in tRNA = 7-aminomethyl-7-carbaguanosine(34) in tRNA + guanine. It functions in the pathway tRNA modification; tRNA-queuosine biosynthesis. Its function is as follows. Catalyzes the base-exchange of a guanine (G) residue with the queuine precursor 7-aminomethyl-7-deazaguanine (PreQ1) at position 34 (anticodon wobble position) in tRNAs with GU(N) anticodons (tRNA-Asp, -Asn, -His and -Tyr). Catalysis occurs through a double-displacement mechanism. The nucleophile active site attacks the C1' of nucleotide 34 to detach the guanine base from the RNA, forming a covalent enzyme-RNA intermediate. The proton acceptor active site deprotonates the incoming PreQ1, allowing a nucleophilic attack on the C1' of the ribose to form the product. After dissociation, two additional enzymatic reactions on the tRNA convert PreQ1 to queuine (Q), resulting in the hypermodified nucleoside queuosine (7-(((4,5-cis-dihydroxy-2-cyclopenten-1-yl)amino)methyl)-7-deazaguanosine). The protein is Queuine tRNA-ribosyltransferase of Solidesulfovibrio magneticus (strain ATCC 700980 / DSM 13731 / RS-1) (Desulfovibrio magneticus).